The chain runs to 352 residues: Mitochondrial ubiquitin ligase activator of NFKB 1 (352 aa).

At 1-8 the chain is on the cytoplasmic side; it reads MESGSRPS. Residues 9–29 form a helical membrane-spanning segment; it reads LGQVILLGTSSMVTAVLYSIY. At 30 to 238 the chain is on the mitochondrial intermembrane side; the sequence is RQKAQVAQEL…LLHRQESSVR (209 aa). Lysine 52 is covalently cross-linked (Glycyl lysine isopeptide (Lys-Gly) (interchain with G-Cter in ubiquitin)). The helical transmembrane segment at 239–259 threads the bilayer; sequence LWKILVLVFGFATCATLFFIL. Topologically, residues 260-352 are cytoplasmic; the sequence is RKQYLHRQER…ITRVIPLYNS (93 aa). A Glycyl lysine isopeptide (Lys-Gly) (interchain with G-Cter in ubiquitin) cross-link involves residue lysine 299. The RING-type zinc-finger motif lies at 302–340; it reads CVVCLSNFKSCVFLECGHVCSCRQCYLALPEPKRCPICR.

In terms of assembly, homooligomer. Interacts with MAP3K7/TAK1. Interacts with UBC9. Interacts with and sumoylates DNM1L. Interacts with MAVS. Interacts with TP53 (via N-terminus); the interaction leads to ubiquitination and proteasomal degradation of TP53. In terms of processing, ubiquitinated by PRKN during mitophagy, leading to its degradation and enhancement of mitophagy. Deubiquitinated by USP30. In terms of tissue distribution, expressed in cortical neurons (at protein level).

It is found in the mitochondrion outer membrane. It localises to the peroxisome. The enzyme catalyses S-ubiquitinyl-[E2 ubiquitin-conjugating enzyme]-L-cysteine + [acceptor protein]-L-lysine = [E2 ubiquitin-conjugating enzyme]-L-cysteine + N(6)-ubiquitinyl-[acceptor protein]-L-lysine.. Its pathway is protein modification; protein ubiquitination. It participates in protein modification; protein sumoylation. Its function is as follows. Exhibits weak E3 ubiquitin-protein ligase activity. E3 ubiquitin ligases accept ubiquitin from an E2 ubiquitin-conjugating enzyme in the form of a thioester and then directly transfer the ubiquitin to targeted substrates. Can ubiquitinate AKT1 preferentially at 'Lys-284' involving 'Lys-48'-linked polyubiquitination and seems to be involved in regulation of Akt signaling by targeting phosphorylated Akt to proteasomal degradation. Mediates polyubiquitination of cytoplasmic TP53 at 'Lys-27' which targets TP53 for proteasomal degradation, thus reducing TP53 levels in the cytoplasm and mitochondrion. Proposed to preferentially act as a SUMO E3 ligase at physiological concentrations. Plays a role in the control of mitochondrial morphology by promoting mitochondrial fragmentation, and influences mitochondrial localization. Likely to promote mitochondrial fission through negatively regulating the mitochondrial fusion proteins MFN1 and MFN2, acting in a pathway that is parallel to the PRKN/PINK1 regulatory pathway. May also be involved in the sumoylation of the membrane fission protein DNM1L. Inhibits cell growth. When overexpressed, activates JNK through MAP3K7/TAK1 and induces caspase-dependent apoptosis. Involved in the modulation of innate immune defense against viruses by inhibiting RIGI-dependent antiviral response. Can mediate RIGI sumoylation and disrupt its polyubiquitination. The protein is Mitochondrial ubiquitin ligase activator of NFKB 1 (Mul1) of Mus musculus (Mouse).